The following is a 425-amino-acid chain: MADKEAAFDDAVEERVINEEHKIWKKNTPFLYDLVMTHALEWPSLTAQWLPDVTRPEGKDFSIHRLVLGTHTSDEQNHLVIASVQLPNDDAQFDASHYDSEKGEFGGFGSVSGKIEIEIKINHEGEVNRARYMPQNPCIIATKTPSSDVLVFDYTKHPSKPDPSGECNPDLRLRGHQKEGYGLSWNPNLSGHLLSASDDHTICLWDISAVPKEGKVVDAKTIFTGHTAVVEDVSWHLLHESLFGSVADDQKLMIWDTRSNNTSKPSHSVDAHTAEVNCLSFNPYSEFILATGSADKTVALWDLRNLKLKLHSFESHKDEIFQVQWSPHNETILASSGTDRRLNVWDLSKIGEEQSPEDAEDGPPELLFIHGGHTAKISDFSWNPNEPWVICSVSEDNIMQVWQMAENIYNDEDPEGSVDPEGQGS.

A2 carries the post-translational modification N-acetylalanine. K4 bears the N6-acetyllysine; alternate mark. K4 participates in a covalent cross-link: Glycyl lysine isopeptide (Lys-Gly) (interchain with G-Cter in SUMO2); alternate. A Glycyl lysine isopeptide (Lys-Gly) (interchain with G-Cter in ubiquitin); alternate cross-link involves residue K4. 7 WD repeats span residues 32–125 (YDLV…NHEG), 126–175 (EVNR…RLRG), 176–223 (HQKE…KTIF), 225–270 (GHTA…HSVD), 271–314 (AHTA…HSFE), 315–371 (SHKD…FIHG), and 372–404 (GHTAKISDFSWNPNEPWVICSVSEDNIMQVWQM). S110 is subject to Phosphoserine. K160 bears the N6-acetyllysine; alternate mark. K160 is covalently cross-linked (Glycyl lysine isopeptide (Lys-Gly) (interchain with G-Cter in SUMO2); alternate). At S355 the chain carries Phosphoserine.

This sequence belongs to the WD repeat RBAP46/RBAP48/MSI1 family. In terms of assembly, binds directly to helix 1 of the histone fold of histone H4, a region that is not accessible when H4 is in chromatin. Subunit of the chromatin assembly factor 1 (CAF-1) complex, which is composed of RBBP4, CHAF1B and CHAF1A. Subunit of the core histone deacetylase (HDAC) complex, which is composed of HDAC1, HDAC2, RBBP4 and RBBP7. The core HDAC complex associates with SIN3A, ARID4B/SAP180, SAP18, SAP30, SAP130, SUDS3/SAP45 and possibly ARID4A/RBP1 and ING1 to form the SIN3 HDAC complex. Component of the nucleosome remodeling and deacetylase (NuRD) repressor complex, composed of core proteins MTA1, MTA2, MTA3, RBBP4, RBBP7, HDAC1, HDAC2, MBD2, MBD3, and peripherally associated proteins CDK2AP1, CDK2AP2, GATAD2A, GATAD2B, CHD3, CHD4 and CHD5. The exact stoichiometry of the NuRD complex is unknown, and some subunits such as MBD2 and MBD3, GATAD2A and GATAD2B, and CHD3, CHD4 and CHD5 define mutually exclusive NuRD complexes. Interacts with ZNF512B; the interaction is direct and may play a role in repressing gene expression. The NuRD complex may also interact with MBD3L1 and MBD3L2. Component of the PRC2 complex, which consists of the core subunits EED, EZH1 or EZH2, SUZ12, and RBBP4, and various combinations of accessory subunits including AEBP2, JARID2, PHF19, MTF2 and EPOP. Forms a monomeric PRC2.2 (class 2) complex consisting of at least SUZ12, RBBP4, AEBP2 and JARID2. Forms a dimeric PRC2.1 (class 1, PRC-PCL) complex consisting of at least SUZ12, RBBP4, and PHF19; PHF19 stabilizes the dimeric structure which enhances PRC2 interaction with chromatin. Component of the NURF-1 ISWI chromatin remodeling complex (also called the nucleosome-remodeling factor (NURF) complex) at least composed of SMARCA1 (isoform 2), BPTF, RBBP4 and RBBP7. Within the complex interacts with isoform 2 of SMARCA1. Component of the BPFT-SMARCA1 complex at least composed of SMARCA1 (isoform 1), BPFT, RBBP4 and RBBP7; the complex is catalytically inactive and does not remodel chromatin. Within the complex interacts with isoform 1 of SMARCA1. Interacts with the ISWI chromatin remodeling complex component SMARCA5; the interaction is direct. Interacts with the viral protein-binding domain of the retinoblastoma protein (RB1). Component of the DREAM complex (also named LINC complex) at least composed of E2F4, E2F5, LIN9, LIN37, LIN52, LIN54, MYBL1, MYBL2, RBL1, RBL2, RBBP4, TFDP1 and TFDP2. The complex exists in quiescent cells where it represses cell cycle-dependent genes. It dissociates in S phase when LIN9, LIN37, LIN52 and LIN54 form a subcomplex that binds to MYBL2. Found in a complex composed of at least SINHCAF, SIN3A, HDAC1, SAP30, RBBP4, OGT and TET1. Interacts with ZNF827; the interaction is direct and recruits RBBP4 to telomeres. Interacts with MTA1; the interaction is direct and mutually exclusive with binding histone H4. Interacts with ARMC12 (via ARM domains). Interacts with BRCA1. Interacts with CDK2AP1. Interacts with CREBBP, and this interaction may be enhanced by the binding of phosphorylated CREB1 to CREBBP. Interacts with ERCC6. Interacts with HDAC7. Interacts with PHF6. Interacts with PWWP2B. Interacts with SPEN/MINT. Interacts with SUV39H1.

It is found in the nucleus. The protein resides in the chromosome. The protein localises to the telomere. Its function is as follows. Core histone-binding subunit that may target chromatin assembly factors, chromatin remodeling factors and histone deacetylases to their histone substrates in a manner that is regulated by nucleosomal DNA. Component of the chromatin assembly factor 1 (CAF-1) complex, which is required for chromatin assembly following DNA replication and DNA repair. Component of the core histone deacetylase (HDAC) complex, which promotes histone deacetylation and consequent transcriptional repression. Component of the nucleosome remodeling and histone deacetylase complex (the NuRD complex), which promotes transcriptional repression by histone deacetylation and nucleosome remodeling. Component of the PRC2 complex, which promotes repression of homeotic genes during development. Component of the NURF (nucleosome remodeling factor) complex. This Pongo abelii (Sumatran orangutan) protein is Histone-binding protein RBBP4 (RBBP4).